Here is a 322-residue protein sequence, read N- to C-terminus: Putative MgpC-like protein MPN_367 (322 aa).

The span at 1–48 shows a compositional bias: low complexity; it reads MVGSGAAGSASSLQGNGSNSSGLKSLLRSAPVSVPPSSTSNQTLSLSN. 2 disordered regions span residues 1 to 59 and 118 to 145; these read MVGS…AVVS and DATS…EPAL. Polar residues predominate over residues 120–134; it reads TSTNLPHAAGASQTG.

This sequence belongs to the MgpC family.

This Mycoplasma pneumoniae (strain ATCC 29342 / M129 / Subtype 1) (Mycoplasmoides pneumoniae) protein is Putative MgpC-like protein MPN_367.